The following is a 262-amino-acid chain: Glucosamine-6-phosphate deaminase (262 aa).

Aspartate 63 acts as the Proton acceptor; for enolization step in catalysis. Asparagine 129 (for ring-opening step) is an active-site residue. Histidine 131 (proton acceptor; for ring-opening step) is an active-site residue. Glutamate 136 serves as the catalytic For ring-opening step.

This sequence belongs to the glucosamine/galactosamine-6-phosphate isomerase family. NagB subfamily.

It catalyses the reaction alpha-D-glucosamine 6-phosphate + H2O = beta-D-fructose 6-phosphate + NH4(+). The protein operates within amino-sugar metabolism; N-acetylneuraminate degradation; D-fructose 6-phosphate from N-acetylneuraminate: step 5/5. Catalyzes the reversible isomerization-deamination of glucosamine 6-phosphate (GlcN6P) to form fructose 6-phosphate (Fru6P) and ammonium ion. This is Glucosamine-6-phosphate deaminase from Bacillus cereus (strain G9842).